Here is a 661-residue protein sequence, read N- to C-terminus: Translation factor GUF1 homolog, mitochondrial (661 aa).

One can recognise a tr-type G domain in the interval 59–242 (ENIRNFCIVA…AIIDRIPSPK (184 aa)). Residues 68–75 (AHVDHGKS), 135–139 (DTPGH), and 189–192 (NKVD) each bind GTP.

It belongs to the TRAFAC class translation factor GTPase superfamily. Classic translation factor GTPase family. LepA subfamily.

It is found in the mitochondrion inner membrane. The enzyme catalyses GTP + H2O = GDP + phosphate + H(+). Functionally, promotes mitochondrial protein synthesis. May act as a fidelity factor of the translation reaction, by catalyzing a one-codon backward translocation of tRNAs on improperly translocated ribosomes. Binds to mitochondrial ribosomes in a GTP-dependent manner. The chain is Translation factor GUF1 homolog, mitochondrial from Ixodes scapularis (Black-legged tick).